A 252-amino-acid polypeptide reads, in one-letter code: Cytochrome c oxidase subunit 2 (252 aa).

Residues 1 to 39 lie on the Mitochondrial intermembrane side of the membrane; sequence MFLIMLKGHILMDAPTPWGIFFQDSASPQMEGIMELHNN. The helical transmembrane segment at 40-59 threads the bilayer; it reads IMFYLAIILFTVTWMMITII. Topologically, residues 60-81 are mitochondrial matrix; sequence RNFVAKKSPIAHKYMNHGTLIE. A helical membrane pass occupies residues 82–105; sequence LIWTITPAFILILIAFPSFKLLYL. The Mitochondrial intermembrane portion of the chain corresponds to 106–252; the sequence is MDEVMDPSLV…LLWLRDQMEG (147 aa). Cu cation is bound by residues histidine 184, cysteine 219, glutamate 221, cysteine 223, histidine 227, and methionine 230. Glutamate 221 is a binding site for Mg(2+).

It belongs to the cytochrome c oxidase subunit 2 family. In terms of assembly, component of the cytochrome c oxidase (complex IV, CIV), a multisubunit enzyme composed of a catalytic core of 3 subunits and several supernumerary subunits. The complex exists as a monomer or a dimer and forms supercomplexes (SCs) in the inner mitochondrial membrane with ubiquinol-cytochrome c oxidoreductase (cytochrome b-c1 complex, complex III, CIII). Requires Cu cation as cofactor.

The protein resides in the mitochondrion inner membrane. It carries out the reaction 4 Fe(II)-[cytochrome c] + O2 + 8 H(+)(in) = 4 Fe(III)-[cytochrome c] + 2 H2O + 4 H(+)(out). Component of the cytochrome c oxidase, the last enzyme in the mitochondrial electron transport chain which drives oxidative phosphorylation. The respiratory chain contains 3 multisubunit complexes succinate dehydrogenase (complex II, CII), ubiquinol-cytochrome c oxidoreductase (cytochrome b-c1 complex, complex III, CIII) and cytochrome c oxidase (complex IV, CIV), that cooperate to transfer electrons derived from NADH and succinate to molecular oxygen, creating an electrochemical gradient over the inner membrane that drives transmembrane transport and the ATP synthase. Cytochrome c oxidase is the component of the respiratory chain that catalyzes the reduction of oxygen to water. Electrons originating from reduced cytochrome c in the intermembrane space (IMS) are transferred via the dinuclear copper A center (CU(A)) of subunit 2 and heme A of subunit 1 to the active site in subunit 1, a binuclear center (BNC) formed by heme A3 and copper B (CU(B)). The BNC reduces molecular oxygen to 2 water molecules using 4 electrons from cytochrome c in the IMS and 4 protons from the mitochondrial matrix. This Emericella nidulans (Aspergillus nidulans) protein is Cytochrome c oxidase subunit 2 (cox2).